Here is a 392-residue protein sequence, read N- to C-terminus: Formate-dependent phosphoribosylglycinamide formyltransferase (392 aa).

N(1)-(5-phospho-beta-D-ribosyl)glycinamide-binding positions include 22-23 (EL) and glutamate 82. Residues arginine 114, lysine 155, 160–165 (SSGKGQ), 195–198 (EGVV), and glutamate 203 contribute to the ATP site. The ATP-grasp domain occupies 119–308 (RLAAEELWVP…EFALHVRAFL (190 aa)). Mg(2+)-binding residues include glutamate 267 and glutamate 279. Residues aspartate 286, lysine 355, and 362-363 (RR) each bind N(1)-(5-phospho-beta-D-ribosyl)glycinamide.

Belongs to the PurK/PurT family. Homodimer.

The catalysed reaction is N(1)-(5-phospho-beta-D-ribosyl)glycinamide + formate + ATP = N(2)-formyl-N(1)-(5-phospho-beta-D-ribosyl)glycinamide + ADP + phosphate + H(+). It functions in the pathway purine metabolism; IMP biosynthesis via de novo pathway; N(2)-formyl-N(1)-(5-phospho-D-ribosyl)glycinamide from N(1)-(5-phospho-D-ribosyl)glycinamide (formate route): step 1/1. In terms of biological role, involved in the de novo purine biosynthesis. Catalyzes the transfer of formate to 5-phospho-ribosyl-glycinamide (GAR), producing 5-phospho-ribosyl-N-formylglycinamide (FGAR). Formate is provided by PurU via hydrolysis of 10-formyl-tetrahydrofolate. This is Formate-dependent phosphoribosylglycinamide formyltransferase from Erwinia tasmaniensis (strain DSM 17950 / CFBP 7177 / CIP 109463 / NCPPB 4357 / Et1/99).